A 477-amino-acid chain; its full sequence is Aspartyl/glutamyl-tRNA(Asn/Gln) amidotransferase subunit B (477 aa).

Belongs to the GatB/GatE family. GatB subfamily. As to quaternary structure, heterotrimer of A, B and C subunits.

The catalysed reaction is L-glutamyl-tRNA(Gln) + L-glutamine + ATP + H2O = L-glutaminyl-tRNA(Gln) + L-glutamate + ADP + phosphate + H(+). The enzyme catalyses L-aspartyl-tRNA(Asn) + L-glutamine + ATP + H2O = L-asparaginyl-tRNA(Asn) + L-glutamate + ADP + phosphate + 2 H(+). Its function is as follows. Allows the formation of correctly charged Asn-tRNA(Asn) or Gln-tRNA(Gln) through the transamidation of misacylated Asp-tRNA(Asn) or Glu-tRNA(Gln) in organisms which lack either or both of asparaginyl-tRNA or glutaminyl-tRNA synthetases. The reaction takes place in the presence of glutamine and ATP through an activated phospho-Asp-tRNA(Asn) or phospho-Glu-tRNA(Gln). In Ureaplasma parvum serovar 3 (strain ATCC 27815 / 27 / NCTC 11736), this protein is Aspartyl/glutamyl-tRNA(Asn/Gln) amidotransferase subunit B.